Consider the following 302-residue polypeptide: HTH-type transcriptional regulator ArgP (302 aa).

The region spanning 4–60 (PDYRTLQALDAVIRERGFERAAQKLCITQSAVSQRIKQLENLFGQPLLVRTVPPRPT) is the HTH lysR-type domain. Positions 21–40 (FERAAQKLCITQSAVSQRIK) form a DNA-binding region, H-T-H motif.

Belongs to the LysR transcriptional regulatory family. As to quaternary structure, homodimer.

In terms of biological role, controls the transcription of genes involved in arginine and lysine metabolism. This Yersinia pseudotuberculosis serotype O:1b (strain IP 31758) protein is HTH-type transcriptional regulator ArgP.